The following is a 653-amino-acid chain: DNA ligase (653 aa).

Residues 32 to 36 (NFEYD) and 80 to 81 (SL) contribute to the NAD(+) site. Lysine 104 serves as the catalytic N6-AMP-lysine intermediate. NAD(+) is bound by residues arginine 125, glutamate 159, and lysine 297. Residues cysteine 386, cysteine 389, cysteine 406, and cysteine 411 each contribute to the Zn(2+) site. The BRCT domain maps to 571-653 (GGSEKLKGLT…EEFIQLLNEA (83 aa)).

It belongs to the NAD-dependent DNA ligase family. LigA subfamily. It depends on Mg(2+) as a cofactor. Mn(2+) serves as cofactor.

It carries out the reaction NAD(+) + (deoxyribonucleotide)n-3'-hydroxyl + 5'-phospho-(deoxyribonucleotide)m = (deoxyribonucleotide)n+m + AMP + beta-nicotinamide D-nucleotide.. DNA ligase that catalyzes the formation of phosphodiester linkages between 5'-phosphoryl and 3'-hydroxyl groups in double-stranded DNA using NAD as a coenzyme and as the energy source for the reaction. It is essential for DNA replication and repair of damaged DNA. The chain is DNA ligase from Lachnoclostridium phytofermentans (strain ATCC 700394 / DSM 18823 / ISDg) (Clostridium phytofermentans).